Reading from the N-terminus, the 317-residue chain is Transaldolase (317 aa).

Catalysis depends on K126, which acts as the Schiff-base intermediate with substrate.

This sequence belongs to the transaldolase family. Type 1 subfamily. As to quaternary structure, homodimer.

The protein resides in the cytoplasm. It catalyses the reaction D-sedoheptulose 7-phosphate + D-glyceraldehyde 3-phosphate = D-erythrose 4-phosphate + beta-D-fructose 6-phosphate. Its pathway is carbohydrate degradation; pentose phosphate pathway; D-glyceraldehyde 3-phosphate and beta-D-fructose 6-phosphate from D-ribose 5-phosphate and D-xylulose 5-phosphate (non-oxidative stage): step 2/3. In terms of biological role, transaldolase is important for the balance of metabolites in the pentose-phosphate pathway. In Burkholderia pseudomallei (strain 1710b), this protein is Transaldolase.